The sequence spans 403 residues: Phosphomevalonate dehydratase large subunit (403 aa).

(R)-5-phosphomevalonate-binding residues include glycine 48, valine 49, serine 50, asparagine 79, and proline 80. A [4Fe-4S] cluster-binding site is contributed by cysteine 119. (R)-5-phosphomevalonate-binding residues include glutamate 138 and serine 139. The [4Fe-4S] cluster site is built by cysteine 301 and cysteine 358. Lysine 378 contacts (R)-5-phosphomevalonate.

This sequence belongs to the AcnX type II large subunit family. As to quaternary structure, heterodimer composed of a large subunit (PMDh-L) and a small subunit (PMDh-S). The cofactor is [4Fe-4S] cluster.

It catalyses the reaction (R)-5-phosphomevalonate = (2E)-3-methyl-5-phosphooxypent-2-enoate + H2O. It participates in isoprenoid biosynthesis; isopentenyl diphosphate biosynthesis via mevalonate pathway. Functionally, component of a hydro-lyase that catalyzes the dehydration of mevalonate 5-phosphate (MVA5P) to form trans-anhydromevalonate 5-phosphate (tAHMP). Involved in the archaeal mevalonate (MVA) pathway, which provides fundamental precursors for isoprenoid biosynthesis, such as isopentenyl diphosphate (IPP) and dimethylallyl diphosphate (DMAPP). In Methanocaldococcus jannaschii (strain ATCC 43067 / DSM 2661 / JAL-1 / JCM 10045 / NBRC 100440) (Methanococcus jannaschii), this protein is Phosphomevalonate dehydratase large subunit.